The primary structure comprises 209 residues: Uridine kinase (209 aa).

Residue 16 to 23 (GGSGSGKT) coordinates ATP.

The protein belongs to the uridine kinase family.

It is found in the cytoplasm. The enzyme catalyses uridine + ATP = UMP + ADP + H(+). It carries out the reaction cytidine + ATP = CMP + ADP + H(+). It functions in the pathway pyrimidine metabolism; CTP biosynthesis via salvage pathway; CTP from cytidine: step 1/3. It participates in pyrimidine metabolism; UMP biosynthesis via salvage pathway; UMP from uridine: step 1/1. This chain is Uridine kinase, found in Lactiplantibacillus plantarum (strain ATCC BAA-793 / NCIMB 8826 / WCFS1) (Lactobacillus plantarum).